A 155-amino-acid chain; its full sequence is Ribosome maturation factor RimP (155 aa).

The protein belongs to the RimP family.

It localises to the cytoplasm. Required for maturation of 30S ribosomal subunits. The polypeptide is Ribosome maturation factor RimP (Desulforapulum autotrophicum (strain ATCC 43914 / DSM 3382 / VKM B-1955 / HRM2) (Desulfobacterium autotrophicum)).